The chain runs to 244 residues: UL16-binding protein 1 (244 aa).

An N-terminal signal peptide occupies residues 1 to 25 (MAAAASPAFLLCLPLLHLLSGWSRA). Residues 26-117 (GWVDTHCLCY…IQVENLIPIE (92 aa)) are MHC class I alpha-1 like. C50 and C66 form a disulfide bridge. Residue N82 is glycosylated (N-linked (GlcNAc...) asparagine). The MHC class I alpha-2 like stretch occupies residues 118–208 (PLTLQARMSC…MYWEQMLDPT (91 aa)). An intrachain disulfide couples C127 to C190. G216 carries the GPI-anchor amidated glycine lipid modification. Residues 217-244 (TTQPKAMATTLSPWSLLIIFLCFILAGR) constitute a propeptide, removed in mature form.

Belongs to the MHC class I family. In terms of assembly, interacts with KLRK1/NKG2D. Does not bind to beta2-microglobulin. As to quaternary structure, (Microbial infection) In CMV-infected cells, interacts with the viral glycoprotein UL16; this interaction causes ULBP1 retention in the endoplasmic reticulum and cis-Golgi and prevents binding to and activation of KLRK1/NKG2D, providing CMV with an immune evasion mechanism. In terms of tissue distribution, expressed in T-cells, B-cells, erythroleukemia cell lines and in a wide range of tissues including heart, brain, lung, liver, testis, lymph node, thymus, tonsil and bone marrow. Also found in fetal heart, brain, lung and liver.

The protein localises to the cell membrane. It localises to the endoplasmic reticulum. Binds and activates the KLRK1/NKG2D receptor, mediating natural killer cell cytotoxicity. The protein is UL16-binding protein 1 (ULBP1) of Homo sapiens (Human).